We begin with the raw amino-acid sequence, 1820 residues long: Sodium channel protein (1820 aa).

The Cytoplasmic segment spans residues 1–117; that stretch reads MARKFSSARP…FNPIRRGAIR (117 aa). The stretch at 108 to 410 is one I repeat; sequence FNPIRRGAIR…VAMAYEEQNQ (303 aa). Residues 118 to 138 form a helical membrane-spanning segment; the sequence is VFVNSAFNFFIMFTIFSNCIF. The Extracellular segment spans residues 139 to 149; it reads MTISNPPAWSK. A helical membrane pass occupies residues 150–171; sequence IVEYTFTGIYTFEVIVKVLSRG. Residues 172 to 176 lie on the Cytoplasmic side of the membrane; it reads FCIGH. A helical transmembrane segment spans residues 177–197; sequence FTFLRDPWNWLDFSVVTMTYI. Residues 198–203 lie on the Extracellular side of the membrane; the sequence is TEFIDL. A helical; Voltage-sensor transmembrane segment spans residues 204 to 224; the sequence is RNVSALRTFRVLRALKTITIF. Topologically, residues 225–243 are cytoplasmic; it reads PGLKTIVRALIESMKQMGD. Residues 244 to 264 form a helical membrane-spanning segment; it reads VVILTVFSLAVFTLAGMQLFM. Residues 265-346 are Extracellular-facing; the sequence is GNLRHKCIRW…PNYGYTNYDN (82 aa). Cys-271 and Cys-324 are oxidised to a cystine. Residues Asn-278, Asn-288, and Asn-317 are each glycosylated (N-linked (GlcNAc...) asparagine). Positions 285–342 are non-homologous region of repeat I; sequence SAYNTTFDFTAYIENEENQYFLDGALDALLCGNNSDAGKCPEGYTCMKAGRNPNYGYT. The pore-forming intramembrane region spans 347-371; it reads FAWTFLCLFRLMLQDYWENLYQMTL. The Extracellular portion of the chain corresponds to 372-378; it reads RAAGKSY. Residues 379-402 traverse the membrane as a helical segment; the sequence is MVFFIMVIFLGSFYLINLILAVVA. Residues 403 to 557 lie on the Cytoplasmic side of the membrane; the sequence is MAYEEQNQAT…CCGPWVFLKK (155 aa). Positions 483-507 are disordered; it reads SVKLSTEEQRSDSKSMDSKHSVDKP. Basic and acidic residues predominate over residues 487–507; that stretch reads STEEQRSDSKSMDSKHSVDKP. The stretch at 548-811 is one II repeat; that stretch reads CCGPWVFLKK…EEDDEVNSLQ (264 aa). A helical transmembrane segment spans residues 558–578; the sequence is WVHFVMMDPFTDLFITLCIIL. Topologically, residues 579-599 are extracellular; the sequence is NTLFMSIEHHPMNESFQSLLS. A glycan (N-linked (GlcNAc...) asparagine) is linked at Asn-591. A helical membrane pass occupies residues 600–620; it reads AGNLVFTTIFAAEMVLKIIAL. The Cytoplasmic portion of the chain corresponds to 621 to 625; that stretch reads DPYYY. A helical transmembrane segment spans residues 626-643; that stretch reads FQQTWNIFDSIIVSLSLL. Residues 644–650 lie on the Extracellular side of the membrane; sequence ELGLSNM. A helical; Voltage-sensor transmembrane segment spans residues 651–671; it reads QGMSVLRSLRLLRIFKLAKSW. The Cytoplasmic portion of the chain corresponds to 672 to 690; the sequence is PTLNILIKIICNSVGALGN. A helical membrane pass occupies residues 691 to 711; sequence LTIVLAIIVFIFALVGFQLFG. Residues 712-734 are Extracellular-facing; that stretch reads KNYKEYVCKISDDCELPRWHMND. An intramembrane region (pore-forming) is located at residues 735-755; sequence FFHSFLIVFRALCGEWIETMW. Residues 756–766 are Extracellular-facing; that stretch reads DCMEVGGVPMC. The cysteines at positions 757 and 766 are disulfide-linked. The helical transmembrane segment at 767 to 790 threads the bilayer; the sequence is LAVYMMVIIIGNLVMLNLFLALLL. Residues 791–1004 are Cytoplasmic-facing; it reads SSFSSDNLSS…TIVEHDYFET (214 aa). Disordered regions lie at residues 844 to 864 and 891 to 959; these read PPSD…DTLP and VKGE…SKDP. A compositionally biased stretch (acidic residues) spans 896 to 910; sequence EIEEEGLVDSSDEED. Polar residues predominate over residues 924–935; that stretch reads SVCSTVDYSPSE. Positions 942–953 are enriched in acidic residues; sequence EEEEEEEEEPEE. The III repeat unit spans residues 988–1295; the sequence is NLRRTCYTIV…KKYYNAMKKL (308 aa). Residues 1005–1025 traverse the membrane as a helical segment; the sequence is FIIFMILLSSGVLAFEDIYIW. The Extracellular segment spans residues 1026-1037; the sequence is RRRVIKVILEYA. The helical transmembrane segment at 1038–1058 threads the bilayer; that stretch reads DKVFTYVFIVEMLLKWVAYGF. Topologically, residues 1059 to 1065 are cytoplasmic; the sequence is KRYFTDA. A helical membrane pass occupies residues 1066 to 1086; the sequence is WCWLDFVIVGASIMGITSSLL. Residues 1087–1091 are Extracellular-facing; sequence GYEEL. Residues 1092 to 1112 traverse the membrane as a helical; Voltage-sensor segment; sequence GAIKNLRTIRALRPLRALSRF. Residues 1113–1131 are Cytoplasmic-facing; the sequence is EGMKVVVRALLGAIPSIMN. The helical transmembrane segment at 1132–1152 threads the bilayer; the sequence is VLLVCLMFWLIFSIMGVNLFA. Residues 1153–1199 lie on the Extracellular side of the membrane; sequence GKFYRCINTTTDEILPVEEVNNRSDCMALMYTNEVRWVNLKVNYDNA. Residues Asn-1160 and Asn-1174 are each glycosylated (N-linked (GlcNAc...) asparagine). The tract at residues 1172–1194 is non-homologous region of repeat III; the sequence is VNNRSDCMALMYTNEVRWVNLKV. An intramembrane region (pore-forming) is located at residues 1200–1221; the sequence is GMGYLSLLQVSTFKGWMDIMYA. At 1222–1243 the chain is on the extracellular side; it reads AVDSREVEDQPIYEINVYMYLY. Residues 1244 to 1264 traverse the membrane as a helical segment; the sequence is FVIFIVFGAFFTLNLFIGVII. Topologically, residues 1265-1320 are cytoplasmic; the sequence is DNFNRQKQKLGGEDLFMTEEQKKYYNAMKKLGSKKAAKCIPRPSNVVQGVVYDIVT. Residues 1304-1602 form an IV repeat; sequence IPRPSNVVQG…WHKFDVHGTQ (299 aa). The helical transmembrane segment at 1321 to 1341 threads the bilayer; that stretch reads QPFTDIFIMALICINMVAMMV. Over 1342 to 1352 the chain is Extracellular; that stretch reads ESEDQSQVKKD. The helical transmembrane segment at 1353–1376 threads the bilayer; it reads ILSQINVIFVIIFTVECLLKLLAL. Over 1377–1380 the chain is Cytoplasmic; the sequence is RQYF. A helical transmembrane segment spans residues 1381–1398; sequence FTVGWNVFDFAVVVISII. Over 1399–1416 the chain is Extracellular; that stretch reads GLLLSDIIEKYFVSPTLF. A helical; Voltage-sensor membrane pass occupies residues 1417–1437; sequence RVIRLARIARVLRLIRAAKGI. The Cytoplasmic segment spans residues 1438–1453; that stretch reads RTLLFALMMSLPALFN. Residues 1454–1474 form a helical membrane-spanning segment; sequence IGLLLFLIMFIFSIFGMSNFA. The Extracellular segment spans residues 1475–1490; it reads YVKKQGGVDDIFNFET. A non-homologous region of repeat IV region spans residues 1490-1505; sequence TFGNSMICLFEITTSA. The segment at residues 1491-1513 is an intramembrane region (pore-forming); that stretch reads FGNSMICLFEITTSAGWDGLLLP. The Extracellular segment spans residues 1514-1543; it reads TLNTGPPDCDPDVENPGTDVRGNCGNPGKG. The helical transmembrane segment at 1544 to 1567 threads the bilayer; sequence ITFFCSYIILSFLVVVNMYIAIIL. Topologically, residues 1568–1820 are cytoplasmic; sequence ENFGVAQEES…GAIVVRESIV (253 aa).

This sequence belongs to the sodium channel (TC 1.A.1.10) family.

It is found in the cell membrane. Functionally, mediates the voltage-dependent sodium ion permeability of excitable membranes. Assuming opened or closed conformations in response to the voltage difference across the membrane, the protein forms a sodium-selective channel through which Na(+) ions may pass in accordance with their electrochemical gradient. The protein is Sodium channel protein of Electrophorus electricus (Electric eel).